We begin with the raw amino-acid sequence, 255 residues long: Ribonuclease HII (255 aa).

The RNase H type-2 domain occupies 72-255 (AIICGIDEVG…KSFEPIKSLL (184 aa)). A divalent metal cation-binding residues include aspartate 78, glutamate 79, and aspartate 170.

The protein belongs to the RNase HII family. Mn(2+) serves as cofactor. It depends on Mg(2+) as a cofactor.

It is found in the cytoplasm. It carries out the reaction Endonucleolytic cleavage to 5'-phosphomonoester.. Functionally, endonuclease that specifically degrades the RNA of RNA-DNA hybrids. In Staphylococcus aureus (strain MSSA476), this protein is Ribonuclease HII.